The following is a 336-amino-acid chain: Peroxidase 20 (336 aa).

The first 24 residues, M1 to G24, serve as a signal peptide directing secretion. 4 cysteine pairs are disulfide-bonded: C39–C119, C72–C77, C125–C331, and C204–C239. The active-site Proton acceptor is H70. Ca(2+)-binding residues include D71, V74, G76, D78, and S80. Residue P167 participates in substrate binding. N170 carries an N-linked (GlcNAc...) asparagine glycan. H197 lines the heme b pocket. Residue T198 participates in Ca(2+) binding. D252, T255, and D260 together coordinate Ca(2+).

It belongs to the peroxidase family. Classical plant (class III) peroxidase subfamily. Requires heme b as cofactor. It depends on Ca(2+) as a cofactor.

The protein resides in the secreted. The catalysed reaction is 2 a phenolic donor + H2O2 = 2 a phenolic radical donor + 2 H2O. Functionally, removal of H(2)O(2), oxidation of toxic reductants, biosynthesis and degradation of lignin, suberization, auxin catabolism, response to environmental stresses such as wounding, pathogen attack and oxidative stress. These functions might be dependent on each isozyme/isoform in each plant tissue. May be implicated in the systemic acquired resistance response via the salicylic acid signal transduction pathway. This chain is Peroxidase 20 (PER20), found in Arabidopsis thaliana (Mouse-ear cress).